A 1488-amino-acid chain; its full sequence is Chromosome partition protein MukB (1488 aa).

Position 34-41 (34-41 (GGNGAGKS)) interacts with ATP. 3 coiled-coil regions span residues 326–418 (LEAD…QYNQ), 444–472 (LDTF…QTAH), and 509–602 (RHLA…QRAP). A flexible hinge region spans residues 666 to 783 (PGGAEDQRLN…SLPIFGRAAR (118 aa)). 3 coiled-coil regions span residues 835–923 (EAEI…AKLE), 977–1116 (EMLS…AKAG), and 1209–1265 (VEAI…LQSV). The disordered stretch occupies residues 1049-1074 (ADSGAEERARQRRDELHAQLSNNRSR). The segment covering 1051–1065 (SGAEERARQRRDELH) has biased composition (basic and acidic residues).

This sequence belongs to the SMC family. MukB subfamily. Homodimerization via its hinge domain. Binds to DNA via its C-terminal region. Interacts, and probably forms a ternary complex, with MukE and MukF via its C-terminal region. The complex formation is stimulated by calcium or magnesium. Interacts with tubulin-related protein FtsZ.

Its subcellular location is the cytoplasm. It is found in the nucleoid. Plays a central role in chromosome condensation, segregation and cell cycle progression. Functions as a homodimer, which is essential for chromosome partition. Involved in negative DNA supercoiling in vivo, and by this means organize and compact chromosomes. May achieve or facilitate chromosome segregation by condensation DNA from both sides of a centrally located replisome during cell division. The protein is Chromosome partition protein MukB of Salmonella paratyphi A (strain ATCC 9150 / SARB42).